Here is a 461-residue protein sequence, read N- to C-terminus: Proline--tRNA ligase (461 aa).

The protein belongs to the class-II aminoacyl-tRNA synthetase family. ProS type 3 subfamily. In terms of assembly, homodimer.

The protein localises to the cytoplasm. It carries out the reaction tRNA(Pro) + L-proline + ATP = L-prolyl-tRNA(Pro) + AMP + diphosphate. Functionally, catalyzes the attachment of proline to tRNA(Pro) in a two-step reaction: proline is first activated by ATP to form Pro-AMP and then transferred to the acceptor end of tRNA(Pro). The sequence is that of Proline--tRNA ligase from Methanococcus vannielii (strain ATCC 35089 / DSM 1224 / JCM 13029 / OCM 148 / SB).